The chain runs to 353 residues: B1 bradykinin receptor (353 aa).

At Met-1–Leu-40 the chain is on the extracellular side. N-linked (GlcNAc...) asparagine glycosylation is found at Asn-14 and Asn-22. Residues Pro-41–Leu-64 traverse the membrane as a helical segment. The Cytoplasmic segment spans residues Pro-65–Glu-73. The chain crosses the membrane as a helical span at residues Ile-74–Trp-98. Residues Asn-99 to Arg-111 are Extracellular-facing. Cysteines 110 and 189 form a disulfide. The helical transmembrane segment at Val-112–Gln-133 threads the bilayer. Topologically, residues Asp-134 to Arg-155 are cytoplasmic. Residues Val-156 to Ile-178 traverse the membrane as a helical segment. The Extracellular segment spans residues Gln-179–His-199. N-linked (GlcNAc...) asparagine glycosylation is present at Asn-185. A helical membrane pass occupies residues Phe-200–Leu-226. Residues Ala-227–Lys-247 are Cytoplasmic-facing. The helical transmembrane segment at Thr-248–Leu-272 threads the bilayer. The Extracellular portion of the chain corresponds to Glu-273–Asp-291. The chain crosses the membrane as a helical span at residues Leu-292–Phe-314. Residues Val-315 to Asn-353 lie on the Cytoplasmic side of the membrane. Cys-330 is lipidated: S-palmitoyl cysteine.

It belongs to the G-protein coupled receptor 1 family. Bradykinin receptor subfamily. BDKRB1 sub-subfamily.

Its subcellular location is the cell membrane. In terms of biological role, this is a receptor for bradykinin. Could be a factor in chronic pain and inflammation. The chain is B1 bradykinin receptor (BDKRB1) from Homo sapiens (Human).